A 1738-amino-acid polypeptide reads, in one-letter code: MGQAVTTPLSLTLDHWKDVERTAHNLSVEVRKRRWVTFCSAEWPTFNVGWPRDGTFNPDIITQVKIKVFSPGPHGHPDQVPYIVTWEAIAVDPPPWVRPFVHPKPPLSLPPSAPSLPPEPPLSTPPQSSLYPALTSPLNTKPRPQVLPDSGGPLIDLLTEDPPPYRDPGPPSPDGNGDSGEVAPTEGAPDPSPMVSRLRGRKEPPVADSTTSQAFPLRLGGNGQYQYWPFSSSDLYNWKNNNPSFSEDPAKLTALIESVLLTHQPTWDDCQQLLGTLLTGEEKQRVLLEARKAVRGEDGRPTQLPNDINDAFPLERPDWDYNTQRGRNHLVHYRQLLLAGLQNAGRSPTNLAKVKGITQGPNESPSAFLERLKEAYRRYTPYDPEDPGQETNVAMSFIWQSAPDIGRKLERLEDLKSKTLGDLVREAEKIFNKRETPEEREERIRRETEEKEERRRAEDVQREKERDRRRHREMSKLLATVVSGQRQDRQGGERRRPQLDHDQCAYCKEKGHWARDCPKKPRGPRGPRPQASLLTLDDQGGQGQEPPPEPRITLRVGGQPVTFLVDTGAQHSVLTQNPGPLSDKSAWVQGATGGKRYRWTTDRRVHLATGKVTHSFLHVPDCPYPLLGRDLLTKLKAQIHFEGSGAQVVGPMGQPLQVLTLNIEDEYRLHETSKGPDVPLGSTWLSDFPQAWAETGGMGLAVRQAPLIIPLKATSTPVSIKQYPMSQEARLGIKPHIQRLLDQGILVPCQSPWNTPLLPVKKPGTNDYRPVQDLREVNKRVEDIHPTVPNPYNLLSGLPPSHQWYTVLDLKDAFFCLRLHPTSQSLFAFEWRDPEMGISGQLTWTRLPQGFKNSPTLFDEALHRDLADFRIQHPDLILLQYVDDLLLAATSELDCQQGTRALLQTLGDLGYRASAKKAQICQKQVKYLGYLLKEGQRWLTEARKETVMGQPTPKTPRQLREFLGTAGFCRLWIPGFAEMAAPLYPLTKTGTLFEWGPDQQKAYQEIKQALLTAPALGLPDLTKPFELFVDEKQGYAKGVLTQKLGPWRRPVAYLSKKLDPVAAGWPPCLRMVAAIAVLTKDAGKLTMGQPLVILAPHAVEALVKQPPDRWLSNARMTHYQALLLDTDRVQFGPIVALNPATLLPLPEEGLQHDCLDILAEAHGTRPDLTDQPLPDADHTWYTDGSSFLQEGQRKAGAAVTTETEVVWAKALPAGTSAQRAELIALTQALKMAEGKKLNVYTDSRYAFATAHIHGEIYRRRGLLTSEGKEIKNKDEILALLKALFLPKRLSIIHCPGHQKGNRAEARGNRMADQAAREVATRETPETSTLLIENSAPYTHEHFHYTVTDIKDLTKLGATYDDAKKCWVYQGKPVMPDQFTFELLDFLHQLTHLSFSKTKALLERNYCPYYMLNRDRTLKDITETCQACAQVNASKSAVKQGTRVRGHRPGTHWEIDFTEVKPGLYGYKYLLVFIDTFSGWVEAFPTKKETAKVVTKKLLEEIFPRFGMPQVLGTDNGPAFVSKVSQTVADLLGVDWKLHCAYRPQSSGQVERMNRTIKETLTKLTLATGSRDWVLLLPLALYRARNTPGPHGLTPYEILYGAPPPLVNFPDPDMAKVTHNPSLQAHLQALYLVQHEVWRPLAAAYQEQLDRPVVPHPFRVGDTVWVRRHQTKNLEPRWKGPYTVLLTTPTALKVDGIAAWIHAAHVKAADTRIEPPSESTWRVQRSQNPLKIRLTRGTS.

Residue glycine 2 is the site of N-myristoyl glycine; by host attachment. Residues 110–124 (PPSAPSLPPEPPLST) show a composition bias toward pro residues. The disordered stretch occupies residues 110-218 (PPSAPSLPPE…STTSQAFPLR (109 aa)). The PTAP/PSAP motif motif lies at 111–114 (PSAP). An LYPX(n)L motif motif is present at residues 130–134 (LYPAL). The segment covering 161-173 (DPPPYRDPGPPSP) has biased composition (pro residues). The PPXY motif motif lies at 162–165 (PPPY). Serine 192 carries the post-translational modification Phosphoserine; by host. Residues 345–393 (GRSPTNLAKVKGITQGPNESPSAFLERLKEAYRRYTPYDPEDPGQETNV) form an interaction with host PIAS4 region. Residues 430 to 435 (IFNKRE) are interaction with host UBE2I. 2 stretches are compositionally biased toward basic and acidic residues: residues 434-466 (RETPEEREERIRRETEEKEERRRAEDVQREKER) and 486-499 (RQDRQGGERRRPQL). Disordered stretches follow at residues 434-499 (RETP…RPQL) and 513-553 (WARD…PRIT). Residues 438 to 478 (EEREERIRRETEEKEERRRAEDVQREKERDRRRHREMSKLL) adopt a coiled-coil conformation. Residues 502–519 (DQCAYCKEKGHWARDCPK) form a CCHC-type zinc finger. The 71-residue stretch at 561-631 (VTFLVDTGAQ…CPYPLLGRDL (71 aa)) folds into the Peptidase A2 domain. Residue aspartate 566 is the Protease; shared with dimeric partner of the active site. Residues 741-932 (LDQGILVPCQ…KQVKYLGYLL (192 aa)) enclose the Reverse transcriptase domain. Aspartate 809, aspartate 883, aspartate 884, aspartate 1183, glutamate 1221, aspartate 1242, and aspartate 1312 together coordinate Mg(2+). The 147-residue stretch at 1174-1320 (PDADHTWYTD…ADQAAREVAT (147 aa)) folds into the RNase H type-1 domain. Residues 1387–1427 (HQLTHLSFSKTKALLERNYCPYYMLNRDRTLKDITETCQAC) form an HHCC-type zinc finger. Positions 1444–1602 (RGHRPGTHWE…TPYEILYGAP (159 aa)) constitute an Integrase catalytic domain. Mg(2+) is bound by residues aspartate 1455 and aspartate 1514.

The protein belongs to the retroviral Pol polyprotein family. Homohexamer; further associates as homomultimer. The virus core is composed of a lattice formed from hexagonal rings, each containing six capsid monomers. In terms of assembly, interacts (via PPXY motif) with host NEDD4. Interacts (via PSAP motif) with host TSG101. Interacts (via LYPX(n)L motif) with host PDCD6IP. As to quaternary structure, the reverse transcriptase is a monomer (Potential). Interacts (via RNase domains) with host release factor ETF1; this interaction is essential for translational readthrough of amber codon between viral gag and pol genes, as well as for viral replication. Homodimer. It depends on Mg(2+) as a cofactor. In terms of processing, ubiquitinated by ITCH. Gag can recruit the ubiquitin ligase Itch in an L domain-independent manner to facilitate virus release via a mechanism that involves Gag ubiquitination. Specific enzymatic cleavages by the viral protease yield mature proteins. The protease is released by autocatalytic cleavage. The polyprotein is cleaved during and after budding, this process is termed maturation. Post-translationally, sumoylated; which is required for virus replication. In terms of processing, phosphorylated on serine residues.

The protein resides in the virion. It localises to the host cell membrane. It is found in the host late endosome membrane. Its subcellular location is the host endosome. The protein localises to the host multivesicular body. The protein resides in the host cytoplasm. It carries out the reaction DNA(n) + a 2'-deoxyribonucleoside 5'-triphosphate = DNA(n+1) + diphosphate. The enzyme catalyses Endonucleolytic cleavage to 5'-phosphomonoester.. With respect to regulation, most efficiently inhibited by Amprenavir, which is able to block Gag-Pol processing in infected cells. Its function is as follows. Plays a role in budding and is processed by the viral protease during virion maturation outside the cell. During budding, it recruits, in a PPXY-dependent or independent manner, Nedd4-like ubiquitin ligases that conjugate ubiquitin molecules to Gag-Pol, or to Gag-Pol binding host factors. Interaction with HECT ubiquitin ligases probably links the viral protein to the host ESCRT pathway and facilitates release. Targets Gag and gag-pol polyproteins to the plasma membrane via a multipartite membrane binding signal, that includes its myristoylated N-terminus. Also mediates nuclear localization of the pre-integration complex. In terms of biological role, constituent of the pre-integration complex (PIC) which tethers the latter to mitotic chromosomes. This allows the integration of the viral genome into the host DNA. Functionally, forms the spherical core of the virion that encapsulates the genomic RNA-nucleocapsid complex. Its function is as follows. Involved in the packaging and encapsidation of two copies of the genome. Binds with high affinity to conserved UCUG elements within the packaging signal, located near the 5'-end of the genome. This binding is dependent on genome dimerization. Acts as a nucleic acid chaperone which is involved in rearrangement of nucleic acid secondary structures during gRNA retrotranscription. The aspartyl protease mediates proteolytic cleavages of Gag and Gag-Pol polyproteins during or shortly after the release of the virion from the plasma membrane. Cleavages take place as an ordered, step-wise cascade to yield mature proteins. This process is called maturation. Displays maximal activity during the budding process just prior to particle release from the cell (Potential). Cleaves the translation initiation factor eIF4G leading to the inhibition of host cap-dependent translation. In terms of biological role, RT is a multifunctional enzyme that converts the viral dimeric RNA genome into dsDNA in the cytoplasm, shortly after virus entry into the cell. This enzyme displays a DNA polymerase activity that can copy either DNA or RNA templates, and a ribonuclease H (RNase H) activity that cleaves the RNA strand of RNA-DNA heteroduplexes in a partially processive 3' to 5' endonucleasic mode. Conversion of viral genomic RNA into dsDNA requires many steps. A tRNA binds to the primer-binding site (PBS) situated at the 5' end of the viral RNA. RT uses the 3' end of the tRNA primer to perform a short round of RNA-dependent minus-strand DNA synthesis. The reading proceeds through the U5 region and ends after the repeated (R) region which is present at both ends of viral RNA. The portion of the RNA-DNA heteroduplex is digested by the RNase H, resulting in a ssDNA product attached to the tRNA primer. This ssDNA/tRNA hybridizes with the identical R region situated at the 3' end of viral RNA. This template exchange, known as minus-strand DNA strong stop transfer, can be either intra- or intermolecular. RT uses the 3' end of this newly synthesized short ssDNA to perform the RNA-dependent minus-strand DNA synthesis of the whole template. RNase H digests the RNA template except for a polypurine tract (PPT) situated at the 5' end of the genome. It is not clear if both polymerase and RNase H activities are simultaneous. RNase H probably can proceed both in a polymerase-dependent (RNA cut into small fragments by the same RT performing DNA synthesis) and a polymerase-independent mode (cleavage of remaining RNA fragments by free RTs). Secondly, RT performs DNA-directed plus-strand DNA synthesis using the PPT that has not been removed by RNase H as primers. PPT and tRNA primers are then removed by RNase H. The 3' and 5' ssDNA PBS regions hybridize to form a circular dsDNA intermediate. Strand displacement synthesis by RT to the PBS and PPT ends produces a blunt ended, linear dsDNA copy of the viral genome that includes long terminal repeats (LTRs) at both ends. Functionally, catalyzes viral DNA integration into the host chromosome, by performing a series of DNA cutting and joining reactions. This enzyme activity takes place after virion entry into a cell and reverse transcription of the RNA genome in dsDNA. The first step in the integration process is 3' processing. This step requires a complex comprising the viral genome, matrix protein and integrase. This complex is called the pre-integration complex (PIC). The integrase protein removes 2 nucleotides from each 3' end of the viral DNA, leaving recessed CA OH's at the 3' ends. In the second step that requires cell division, the PIC enters cell nucleus. In the third step, termed strand transfer, the integrase protein joins the previously processed 3' ends to the 5' ends of strands of target cellular DNA at the site of integration. The last step is viral DNA integration into host chromosome. In Mus musculus (Mouse), this protein is Gag-Pol polyprotein (pol).